A 101-amino-acid polypeptide reads, in one-letter code: NADH-quinone oxidoreductase subunit K (101 aa).

A run of 3 helical transmembrane segments spans residues 4–24, 30–50, and 65–85; these read LEHY…GLFL, IVLL…LVAF, and FVLT…VCFF.

It belongs to the complex I subunit 4L family. As to quaternary structure, NDH-1 is composed of 14 different subunits. Subunits NuoA, H, J, K, L, M, N constitute the membrane sector of the complex.

It is found in the cell inner membrane. The enzyme catalyses a quinone + NADH + 5 H(+)(in) = a quinol + NAD(+) + 4 H(+)(out). Its function is as follows. NDH-1 shuttles electrons from NADH, via FMN and iron-sulfur (Fe-S) centers, to quinones in the respiratory chain. The immediate electron acceptor for the enzyme in this species is believed to be ubiquinone. Couples the redox reaction to proton translocation (for every two electrons transferred, four hydrogen ions are translocated across the cytoplasmic membrane), and thus conserves the redox energy in a proton gradient. This chain is NADH-quinone oxidoreductase subunit K, found in Ruegeria pomeroyi (strain ATCC 700808 / DSM 15171 / DSS-3) (Silicibacter pomeroyi).